Here is a 261-residue protein sequence, read N- to C-terminus: Calcium-binding protein 8 (261 aa).

The tract at residues Met-1 to Glu-41 is disordered. Residues Met-1–Ser-234 are Cytoplasmic-facing. Positions Gly-8–Pro-33 are enriched in basic and acidic residues. EF-hand domains lie at Glu-78–Met-113 and Pro-114–Ser-149. Asp-91, Asp-93, Asn-95, Glu-102, Asp-127, Asp-129, Asp-131, Gln-133, and Glu-138 together coordinate Ca(2+). A helical; Anchor for type IV membrane protein transmembrane segment spans residues Leu-235 to Ile-255. Topologically, residues Leu-256–Glu-261 are extracellular.

As to quaternary structure, interacts with PI4KB. This binding competes with FREQ/NCS1 binding in a calcium-dependent manner. In terms of tissue distribution, brain-specific. High expression in the cerebellum, hippocampus, and cortex.

It localises to the golgi apparatus. The protein resides in the trans-Golgi network membrane. Its subcellular location is the cytoplasm. It is found in the perinuclear region. The protein localises to the cell membrane. Its function is as follows. Negatively regulates Golgi-to-plasma membrane trafficking by interacting with PI4KB and inhibiting its activity. May play a role in the physiology of neurons and is potentially important in memory and learning. This is Calcium-binding protein 8 (Caln1) from Mus musculus (Mouse).